We begin with the raw amino-acid sequence, 660 residues long: MNDHPAQDAFQHAELDWDENGLPQSRHYGDVYFSRASGLAETEHVFLAQNDLPRRFAAMQPDECLVIGETGFGTGLNFLCAWQLFERSASARARLHFVSVEKHPLTFADMQRALALWPELQAQAEQLLEQYVALNPGYQRLVFAGGRVVLTLLIGDVLECLPSLDARIDAWFLDGFAPAKNPQMWQPALFSEMARLSAPGATLGTFTSAGFVRRGLIEAGFDMQRVPGYGHKREILRGHLQSSTAQMADKPWFARPGRTVRERRAVVIGAGLAGCATAAALAARGWRVSVLERHADAAQEGSGNPQGVLYLKLSAHGTALSKLVVGGFSYTRRLLGHLQQGQDWQACGVLQLIYDDKERQRQAELAEAFPPSLVHPLERDAAEALAGVALTEGGLFYPDAGWAHPPALCRWLLQRPGIELLRHREALDLRRHGEAWQVLGGEGVLAEAPVVVLAGAADAARFEQSAWLPLKRIRGQISALPATARSGQLRTVLCAKGYVAPPRDGTHTLGASFNFQQTDDAPSVAEHQANLEMLEQISTDLYQRLQADPQRTEALQGRVAFRCTSPDYLPLIGPLADPQRFAEAYAALARNARQSVQAVCPWLDGLYVNTAHGSRGMISAPLSGELLAAWLDDEPLPLPREVAEACHPNRFLLRKLIRGT.

The segment at 1 to 241 (MNDHPAQDAF…KREILRGHLQ (241 aa)) is tRNA (mnm(5)s(2)U34)-methyltransferase. Residues 268–660 (IGAGLAGCAT…FLLRKLIRGT (393 aa)) form an FAD-dependent cmnm(5)s(2)U34 oxidoreductase region.

It in the N-terminal section; belongs to the methyltransferase superfamily. tRNA (mnm(5)s(2)U34)-methyltransferase family. This sequence in the C-terminal section; belongs to the DAO family. It depends on FAD as a cofactor.

The protein resides in the cytoplasm. The enzyme catalyses 5-aminomethyl-2-thiouridine(34) in tRNA + S-adenosyl-L-methionine = 5-methylaminomethyl-2-thiouridine(34) in tRNA + S-adenosyl-L-homocysteine + H(+). Catalyzes the last two steps in the biosynthesis of 5-methylaminomethyl-2-thiouridine (mnm(5)s(2)U) at the wobble position (U34) in tRNA. Catalyzes the FAD-dependent demodification of cmnm(5)s(2)U34 to nm(5)s(2)U34, followed by the transfer of a methyl group from S-adenosyl-L-methionine to nm(5)s(2)U34, to form mnm(5)s(2)U34. The chain is tRNA 5-methylaminomethyl-2-thiouridine biosynthesis bifunctional protein MnmC from Stutzerimonas stutzeri (strain A1501) (Pseudomonas stutzeri).